A 128-amino-acid polypeptide reads, in one-letter code: Small ribosomal subunit protein uS12 (128 aa).

Asp89 carries the post-translational modification 3-methylthioaspartic acid.

This sequence belongs to the universal ribosomal protein uS12 family. As to quaternary structure, part of the 30S ribosomal subunit. Contacts proteins S8 and S17. May interact with IF1 in the 30S initiation complex.

Functionally, with S4 and S5 plays an important role in translational accuracy. In terms of biological role, interacts with and stabilizes bases of the 16S rRNA that are involved in tRNA selection in the A site and with the mRNA backbone. Located at the interface of the 30S and 50S subunits, it traverses the body of the 30S subunit contacting proteins on the other side and probably holding the rRNA structure together. The combined cluster of proteins S8, S12 and S17 appears to hold together the shoulder and platform of the 30S subunit. This is Small ribosomal subunit protein uS12 from Campylobacter jejuni subsp. doylei (strain ATCC BAA-1458 / RM4099 / 269.97).